We begin with the raw amino-acid sequence, 583 residues long: cAMP-dependent protein kinase catalytic subunit 3 (583 aa).

Disordered regions lie at residues 51-75 and 98-264; these read ATPT…TIGK and SGTA…QTAK. Polar residues-rich tracts occupy residues 52-69 and 98-107; these read TPTQ…TGTP and SGTAGSTSKL. Residues 108-162 show a composition bias toward low complexity; sequence TTGNGSGNTMTSAYKIPSNNSTTANDSSNTETTFTFKLGRSNGRSSSNVASSESS. The segment covering 163–176 has biased composition (acidic residues); it reads DPLESDYSEEDPEQ. The segment covering 181 to 200 has biased composition (low complexity); sequence PDPATNSRSSSTATTTTTSS. Over residues 205-219 the composition is skewed to acidic residues; the sequence is NDVDEEDEEDDENEG. Residues 221–234 show a composition bias toward basic and acidic residues; it reads GNGRDADDATHDSS. Over residues 235–256 the composition is skewed to acidic residues; the sequence is ESIEEDDGNETDDEEDDDESEE. Positions 274-528 constitute a Protein kinase domain; that stretch reads YQIIKTVGTG…ADDVKRHRWF (255 aa). ATP is bound by residues 280–288 and K303; that span reads VGTGTFGRV. Catalysis depends on D397, which acts as the Proton acceptor. Residues 529–583 form the AGC-kinase C-terminal domain; that stretch reads KHLNWNDVYSKKLKPPILPDVHHDGDTKNFDDYPEKDWKPAKAVDQRDLQYFNDF.

This sequence belongs to the protein kinase superfamily. AGC Ser/Thr protein kinase family. cAMP subfamily. Expressed in embryonic mesoderm, and the optic lamina, wing disk and leg disks of third instar larvae. More abundant in adult head than adult body.

It carries out the reaction L-seryl-[protein] + ATP = O-phospho-L-seryl-[protein] + ADP + H(+). The enzyme catalyses L-threonyl-[protein] + ATP = O-phospho-L-threonyl-[protein] + ADP + H(+). Functionally, does not have an essential role in development. This is cAMP-dependent protein kinase catalytic subunit 3 (Pka-C3) from Drosophila melanogaster (Fruit fly).